Consider the following 74-residue polypeptide: Conotoxin VnMEKL-0221 (74 aa).

Residues 1–19 form the signal peptide; sequence MEKLTILLLVAAVLMWTQA. The propeptide occupies 20–46; sequence LIQEKRPKEKIKFLSKRKTTAESWWEG. 3 disulfides stabilise this stretch: cysteine 48-cysteine 62, cysteine 55-cysteine 66, and cysteine 61-cysteine 71.

Belongs to the conotoxin O2 superfamily. In terms of tissue distribution, expressed by the venom duct.

It localises to the secreted. This chain is Conotoxin VnMEKL-0221, found in Conus ventricosus (Mediterranean cone).